The following is a 117-amino-acid chain: Immunoglobulin heavy variable 4-38-2 (117 aa).

Positions 1-19 (MKHLWFFLLLVAAPRWVLS) are cleaved as a signal peptide. Residues 20 to 44 (QVQLQESGPGLVKPSETLSLTCTVS) form a framework-1 region. An Ig-like domain is found at 20–117 (QVQLQESGPG…ADTAVYYCAR (98 aa)). Cysteine 41 and cysteine 115 are joined by a disulfide. The complementarity-determining-1 stretch occupies residues 45–53 (GYSISSGYY). A framework-2 region spans residues 54-70 (WGWIRQPPGKGLEWIGS). Residues 71–77 (IYHSGST) form a complementarity-determining-2 region. The interval 78–115 (YYNPSLKSRVTISVDTSKNQFSLKLSSVTAADTAVYYC) is framework-3. The segment at 116–117 (AR) is complementarity-determining-3.

As to quaternary structure, immunoglobulins are composed of two identical heavy chains and two identical light chains; disulfide-linked.

It localises to the secreted. The protein localises to the cell membrane. In terms of biological role, v region of the variable domain of immunoglobulin heavy chains that participates in the antigen recognition. Immunoglobulins, also known as antibodies, are membrane-bound or secreted glycoproteins produced by B lymphocytes. In the recognition phase of humoral immunity, the membrane-bound immunoglobulins serve as receptors which, upon binding of a specific antigen, trigger the clonal expansion and differentiation of B lymphocytes into immunoglobulins-secreting plasma cells. Secreted immunoglobulins mediate the effector phase of humoral immunity, which results in the elimination of bound antigens. The antigen binding site is formed by the variable domain of one heavy chain, together with that of its associated light chain. Thus, each immunoglobulin has two antigen binding sites with remarkable affinity for a particular antigen. The variable domains are assembled by a process called V-(D)-J rearrangement and can then be subjected to somatic hypermutations which, after exposure to antigen and selection, allow affinity maturation for a particular antigen. This Homo sapiens (Human) protein is Immunoglobulin heavy variable 4-38-2.